Reading from the N-terminus, the 406-residue chain is Phosphopentomutase (406 aa).

Mn(2+) contacts are provided by aspartate 10, aspartate 305, histidine 310, aspartate 346, histidine 347, and histidine 358.

The protein belongs to the phosphopentomutase family. Mn(2+) is required as a cofactor.

The protein resides in the cytoplasm. It carries out the reaction 2-deoxy-alpha-D-ribose 1-phosphate = 2-deoxy-D-ribose 5-phosphate. The catalysed reaction is alpha-D-ribose 1-phosphate = D-ribose 5-phosphate. The protein operates within carbohydrate degradation; 2-deoxy-D-ribose 1-phosphate degradation; D-glyceraldehyde 3-phosphate and acetaldehyde from 2-deoxy-alpha-D-ribose 1-phosphate: step 1/2. Its function is as follows. Isomerase that catalyzes the conversion of deoxy-ribose 1-phosphate (dRib-1-P) and ribose 1-phosphate (Rib-1-P) to deoxy-ribose 5-phosphate (dRib-5-P) and ribose 5-phosphate (Rib-5-P), respectively. The chain is Phosphopentomutase from Rhizobium meliloti (strain 1021) (Ensifer meliloti).